The sequence spans 424 residues: Protein TUNICAMYCIN INDUCED 1 (424 aa).

Residues 1–25 (MGHRVLVYVGALFLILFTIFPSSSA) form the signal peptide. N-linked (GlcNAc...) asparagine glycans are attached at residues Asn-197, Asn-296, and Asn-406.

As to expression, restricted to pollen grains at high levels.

Its subcellular location is the endoplasmic reticulum. Involved in the regulation of pollen surface morphology, probably by modulating the secretion of proteins and/or lipids during pollen development. The chain is Protein TUNICAMYCIN INDUCED 1 from Arabidopsis thaliana (Mouse-ear cress).